An 839-amino-acid chain; its full sequence is Probable beta-glucosidase I (839 aa).

Residue Asn197 is glycosylated (N-linked (GlcNAc...) asparagine). Asp225 is an active-site residue. In terms of domain architecture, PA14 spans 395-555; it reads DGKTGFSFKV…GQEELISNAV (161 aa). Asn620 carries N-linked (GlcNAc...) asparagine glycosylation.

Belongs to the glycosyl hydrolase 3 family.

Its subcellular location is the secreted. It carries out the reaction Hydrolysis of terminal, non-reducing beta-D-glucosyl residues with release of beta-D-glucose.. Its pathway is glycan metabolism; cellulose degradation. Beta-glucosidases are one of a number of cellulolytic enzymes involved in the degradation of cellulosic biomass. Catalyzes the last step releasing glucose from the inhibitory cellobiose. In Aspergillus flavus (strain ATCC 200026 / FGSC A1120 / IAM 13836 / NRRL 3357 / JCM 12722 / SRRC 167), this protein is Probable beta-glucosidase I (bglI).